A 453-amino-acid chain; its full sequence is DDB1- and CUL4-associated factor 12 (453 aa).

Basic residues predominate over residues 1–12 (MARKAVSRKRKA). The segment at 1–34 (MARKAVSRKRKASASPGAGSDAQGPQFGWDHSLH) is disordered. The tract at residues 1–38 (MARKAVSRKRKASASPGAGSDAQGPQFGWDHSLHKRKR) is required for nuclear location and interaction with MOV10. At S15 the chain carries Phosphoserine. WD repeat units follow at residues 138–178 (QQGC…PVCV), 182–220 (GHKD…LTKS), 250–289 (PDNC…SKLL), and 338–375 (ERGS…FLEE).

This sequence belongs to the WD repeat DCAF12 family. Component of the DCX(DCAF12) E3 ubiquitin ligase complex, at least composed of CUL4 (CUL4A or CUL4B), DDB1, DCAF12 and RBX1.

It localises to the cytoplasm. The protein localises to the cytoskeleton. The protein resides in the microtubule organizing center. It is found in the centrosome. Its subcellular location is the nucleus. The protein operates within protein modification; protein ubiquitination. Functionally, substrate-recognition component of a DCX (DDB1-CUL4-X-box) E3 ubiquitin-protein ligase complex of the DesCEND (destruction via C-end degrons) pathway, which recognizes a C-degron located at the extreme C terminus of target proteins, leading to their ubiquitination and degradation. The C-degron recognized by the DesCEND pathway is usually a motif of less than ten residues and can be present in full-length proteins, truncated proteins or proteolytically cleaved forms. The DCX(DCAF12) complex specifically recognizes proteins with a diglutamate (Glu-Glu) at the C-terminus, such as MAGEA3, MAGEA6 and CCT5, leading to their ubiquitination and degradation. Ubiquitination of MAGEA3, MAGEA6 by DCX(DCAF12) complex is required for starvation-induced autophagy. Also directly recognizes the C-terminal glutamate-leucine (Glu-Leu) degron as an alternative degron in proteins such as MOV10, leading to their ubiquitination and degradation. Controls the protein level of MOV10 during spermatogenesis and in T cells, especially after their activation. In Mus musculus (Mouse), this protein is DDB1- and CUL4-associated factor 12.